Here is a 314-residue protein sequence, read N- to C-terminus: Homeobox-leucine zipper protein HAT7 (314 aa).

A disordered region spans residues 77 to 109 (HHHLTQKSPTTTNNMNDQDQVGEEDNLSDDGSH). The span at 82–95 (QKSPTTTNNMNDQD) shows a compositional bias: polar residues. A DNA-binding region (homeobox) is located at residues 112 to 171 (LGEKKKRLNLEQVRALEKSFELGNKLEPERKMQLAKALGLQPRQIAIWFQNRRARWKTKQ). The interval 172–207 (LERDYDSLKKQFDVLKSDNDSLLAHNKKLHAELVAL) is leucine-zipper.

Belongs to the HD-ZIP homeobox family. Class I subfamily. Expressed predominantly in flowers, and in the cortex of the root and the stem.

It is found in the nucleus. Its function is as follows. Probable transcription factor. This chain is Homeobox-leucine zipper protein HAT7 (HAT7), found in Arabidopsis thaliana (Mouse-ear cress).